A 134-amino-acid polypeptide reads, in one-letter code: Ribosome-binding factor A (134 aa).

Belongs to the RbfA family. As to quaternary structure, monomer. Binds 30S ribosomal subunits, but not 50S ribosomal subunits or 70S ribosomes.

Its subcellular location is the cytoplasm. Functionally, one of several proteins that assist in the late maturation steps of the functional core of the 30S ribosomal subunit. Associates with free 30S ribosomal subunits (but not with 30S subunits that are part of 70S ribosomes or polysomes). Required for efficient processing of 16S rRNA. May interact with the 5'-terminal helix region of 16S rRNA. In Sinorhizobium medicae (strain WSM419) (Ensifer medicae), this protein is Ribosome-binding factor A.